Reading from the N-terminus, the 337-residue chain is Ketol-acid reductoisomerase (NADP(+)) (337 aa).

The region spanning 1 to 180 (MQVYYDKDAD…GGTKGGVIET (180 aa)) is the KARI N-terminal Rossmann domain. Residues 24–27 (YGSQ), R47, and S51 each bind NADP(+). The active site involves H106. G132 provides a ligand contact to NADP(+). Positions 181 to 326 (TFREETETDL…ARLRAMMPWI (146 aa)) constitute a KARI C-terminal knotted domain. Positions 189, 193, 225, and 229 each coordinate Mg(2+). S250 lines the substrate pocket.

The protein belongs to the ketol-acid reductoisomerase family. The cofactor is Mg(2+).

The catalysed reaction is (2R)-2,3-dihydroxy-3-methylbutanoate + NADP(+) = (2S)-2-acetolactate + NADPH + H(+). It carries out the reaction (2R,3R)-2,3-dihydroxy-3-methylpentanoate + NADP(+) = (S)-2-ethyl-2-hydroxy-3-oxobutanoate + NADPH + H(+). The protein operates within amino-acid biosynthesis; L-isoleucine biosynthesis; L-isoleucine from 2-oxobutanoate: step 2/4. It functions in the pathway amino-acid biosynthesis; L-valine biosynthesis; L-valine from pyruvate: step 2/4. In terms of biological role, involved in the biosynthesis of branched-chain amino acids (BCAA). Catalyzes an alkyl-migration followed by a ketol-acid reduction of (S)-2-acetolactate (S2AL) to yield (R)-2,3-dihydroxy-isovalerate. In the isomerase reaction, S2AL is rearranged via a Mg-dependent methyl migration to produce 3-hydroxy-3-methyl-2-ketobutyrate (HMKB). In the reductase reaction, this 2-ketoacid undergoes a metal-dependent reduction by NADPH to yield (R)-2,3-dihydroxy-isovalerate. This is Ketol-acid reductoisomerase (NADP(+)) from Neisseria gonorrhoeae (strain ATCC 700825 / FA 1090).